We begin with the raw amino-acid sequence, 292 residues long: NAD kinase (292 aa).

Residue aspartate 73 is the Proton acceptor of the active site. NAD(+) is bound by residues 73 to 74 (DG), 147 to 148 (NE), histidine 158, arginine 175, aspartate 177, 188 to 193 (TAYSLS), and glutamine 247.

The protein belongs to the NAD kinase family. Requires a divalent metal cation as cofactor.

It is found in the cytoplasm. It carries out the reaction NAD(+) + ATP = ADP + NADP(+) + H(+). Functionally, involved in the regulation of the intracellular balance of NAD and NADP, and is a key enzyme in the biosynthesis of NADP. Catalyzes specifically the phosphorylation on 2'-hydroxyl of the adenosine moiety of NAD to yield NADP. In Erwinia tasmaniensis (strain DSM 17950 / CFBP 7177 / CIP 109463 / NCPPB 4357 / Et1/99), this protein is NAD kinase.